Reading from the N-terminus, the 114-residue chain is Adapter SH3BGRL (114 aa).

A required for interaction with HER2 region spans residues S13 to R50. Residues P54–N71 form a required for interaction with PFN1, HER2, and ATG12 region. The SH3-binding signature appears at T61–P67.

The protein belongs to the SH3BGR family. As to quaternary structure, monomer. Interacts with PFN1/Profilin-1. Interacts with ERBB2. Interacts with ATG12. Interacts with BECN1. Interacts with translating ribosomes.

The protein resides in the cytoplasm. The protein localises to the cytosol. Its subcellular location is the cell membrane. Its function is as follows. Appears to function as an adapter protein that bridges proteins together or proteins with mRNAs. May function as a ubiquitin ligase-substrate adapter. Additionally, associates with translating cytoplasmic ribosomes and may promote the expression of specific mRNAs. The sequence is that of Adapter SH3BGRL (SH3BGRL) from Bos taurus (Bovine).